The primary structure comprises 220 residues: V-set and transmembrane domain-containing protein 2-like protein (220 aa).

Positions 1-24 (MGAPLAAALGALHYLALFLQLGGA) are cleaved as a signal peptide. The 118-residue stretch at 41–158 (ALFTETPHDM…DGGRGVPRVL (118 aa)) folds into the Ig-like domain. The cysteines at positions 62 and 142 are disulfide-linked. A compositionally biased stretch (pro residues) spans 165-180 (PAPPRAPRPRGQPPGE). Positions 165-220 (PAPPRAPRPRGQPPGEEPGRGPTLLFLIILPGTGSGTPREAEPHQPHAGGCPARQS) are disordered.

This Mus musculus (Mouse) protein is V-set and transmembrane domain-containing protein 2-like protein (Vstm2l).